The following is a 370-amino-acid chain: Cytochrome b (370 aa).

The next 4 membrane-spanning stretches (helical) occupy residues 25 to 45 (FGSMLLACSTLQVLTGFFLAV), 69 to 90 (WLMQNLHAIGASMFFICIYIHI), 105 to 125 (WLSGTTLLIMLMATAFFGYVL), and 170 to 190 (FFALHFILPFGIISLSSLHIL). 2 residues coordinate heme b: histidine 75 and histidine 89. Residues histidine 174 and histidine 188 each contribute to the heme b site. Position 193 (histidine 193) interacts with a ubiquinone. 4 helical membrane passes run 218–238 (YKDLLMLAMLTTLLLMIVSFF), 280–300 (LGGALALTMSIMILLTVPFTH), 312–332 (LMQLMFWTFAATFLVISWSST), and 339–358 (FTTISQAAALMYFLFFISKP).

It belongs to the cytochrome b family. As to quaternary structure, the cytochrome bc1 complex contains 3 respiratory subunits (MT-CYB, CYC1 and UQCRFS1), 2 core proteins (UQCRC1 and UQCRC2) and probably 6 low-molecular weight proteins. Requires heme b as cofactor.

Its subcellular location is the mitochondrion inner membrane. Functionally, component of the ubiquinol-cytochrome c reductase complex (complex III or cytochrome b-c1 complex) that is part of the mitochondrial respiratory chain. The b-c1 complex mediates electron transfer from ubiquinol to cytochrome c. Contributes to the generation of a proton gradient across the mitochondrial membrane that is then used for ATP synthesis. The sequence is that of Cytochrome b (MT-CYB) from Chilabothrus subflavus (Jamaican yellow boa).